We begin with the raw amino-acid sequence, 100 residues long: UPF0298 protein lp_2135 (100 aa).

Belongs to the UPF0298 family.

The protein resides in the cytoplasm. In Lactiplantibacillus plantarum (strain ATCC BAA-793 / NCIMB 8826 / WCFS1) (Lactobacillus plantarum), this protein is UPF0298 protein lp_2135.